We begin with the raw amino-acid sequence, 347 residues long: Elongation factor Ts (347 aa).

The involved in Mg(2+) ion dislocation from EF-Tu stretch occupies residues 80 to 83; that stretch reads TDFV.

The protein belongs to the EF-Ts family.

The protein localises to the cytoplasm. Associates with the EF-Tu.GDP complex and induces the exchange of GDP to GTP. It remains bound to the aminoacyl-tRNA.EF-Tu.GTP complex up to the GTP hydrolysis stage on the ribosome. The chain is Elongation factor Ts from Streptococcus gordonii (strain Challis / ATCC 35105 / BCRC 15272 / CH1 / DL1 / V288).